Reading from the N-terminus, the 348-residue chain is Dihydroorotase (348 aa).

Residues histidine 14 and histidine 16 each coordinate Zn(2+). Substrate contacts are provided by residues histidine 16–arginine 18 and asparagine 42. Residues lysine 100, histidine 137, and histidine 175 each coordinate Zn(2+). Lysine 100 carries the N6-carboxylysine modification. Histidine 137 is a binding site for substrate. Leucine 220 contacts substrate. Aspartate 248 contributes to the Zn(2+) binding site. Residue aspartate 248 is part of the active site. Histidine 252 and alanine 264 together coordinate substrate.

It belongs to the metallo-dependent hydrolases superfamily. DHOase family. Class II DHOase subfamily. In terms of assembly, homodimer. Requires Zn(2+) as cofactor.

The catalysed reaction is (S)-dihydroorotate + H2O = N-carbamoyl-L-aspartate + H(+). It functions in the pathway pyrimidine metabolism; UMP biosynthesis via de novo pathway; (S)-dihydroorotate from bicarbonate: step 3/3. Catalyzes the reversible cyclization of carbamoyl aspartate to dihydroorotate. In Pseudomonas fluorescens (strain ATCC BAA-477 / NRRL B-23932 / Pf-5), this protein is Dihydroorotase.